Consider the following 400-residue polypeptide: Formate-dependent phosphoribosylglycinamide formyltransferase (400 aa).

Residues 22–23 (EL) and glutamate 82 contribute to the N(1)-(5-phospho-beta-D-ribosyl)glycinamide site. ATP contacts are provided by residues arginine 114, lysine 155, 160 to 165 (SSGKGQ), 195 to 198 (EGFV), and glutamate 203. In terms of domain architecture, ATP-grasp spans 119–308 (RLAAEELGLS…EFALHARALL (190 aa)). Residues glutamate 267 and glutamate 279 each contribute to the Mg(2+) site. Residues aspartate 286, lysine 356, and 363 to 364 (RR) contribute to the N(1)-(5-phospho-beta-D-ribosyl)glycinamide site.

This sequence belongs to the PurK/PurT family. Homodimer.

It carries out the reaction N(1)-(5-phospho-beta-D-ribosyl)glycinamide + formate + ATP = N(2)-formyl-N(1)-(5-phospho-beta-D-ribosyl)glycinamide + ADP + phosphate + H(+). The protein operates within purine metabolism; IMP biosynthesis via de novo pathway; N(2)-formyl-N(1)-(5-phospho-D-ribosyl)glycinamide from N(1)-(5-phospho-D-ribosyl)glycinamide (formate route): step 1/1. Its function is as follows. Involved in the de novo purine biosynthesis. Catalyzes the transfer of formate to 5-phospho-ribosyl-glycinamide (GAR), producing 5-phospho-ribosyl-N-formylglycinamide (FGAR). Formate is provided by PurU via hydrolysis of 10-formyl-tetrahydrofolate. The polypeptide is Formate-dependent phosphoribosylglycinamide formyltransferase (Hahella chejuensis (strain KCTC 2396)).